We begin with the raw amino-acid sequence, 276 residues long: Bifunctional protein FolD 1 (276 aa).

NADP(+)-binding positions include 161 to 163 (GRG), Ser-186, and Thr-227.

This sequence belongs to the tetrahydrofolate dehydrogenase/cyclohydrolase family. In terms of assembly, homodimer.

The enzyme catalyses (6R)-5,10-methylene-5,6,7,8-tetrahydrofolate + NADP(+) = (6R)-5,10-methenyltetrahydrofolate + NADPH. It catalyses the reaction (6R)-5,10-methenyltetrahydrofolate + H2O = (6R)-10-formyltetrahydrofolate + H(+). It participates in one-carbon metabolism; tetrahydrofolate interconversion. In terms of biological role, catalyzes the oxidation of 5,10-methylenetetrahydrofolate to 5,10-methenyltetrahydrofolate and then the hydrolysis of 5,10-methenyltetrahydrofolate to 10-formyltetrahydrofolate. This is Bifunctional protein FolD 1 from Frankia casuarinae (strain DSM 45818 / CECT 9043 / HFP020203 / CcI3).